The chain runs to 210 residues: Transcriptional regulator MxiE (210 aa).

The region spanning 99–199 (YHLVLYLLRT…GFSARELSNI (101 aa)) is the HTH araC/xylS-type domain. 2 consecutive DNA-binding regions (H-T-H motif) follow at residues 118 to 139 (KSLT…RKAL) and 166 to 189 (ITSA…KTRL).

Functionally, necessary for the secretion of ipa invasins. Probable transcriptional regulatory protein. The polypeptide is Transcriptional regulator MxiE (mxiE) (Shigella flexneri).